We begin with the raw amino-acid sequence, 331 residues long: 6-phosphogluconolactonase (331 aa).

Belongs to the cycloisomerase 2 family.

It catalyses the reaction 6-phospho-D-glucono-1,5-lactone + H2O = 6-phospho-D-gluconate + H(+). Its pathway is carbohydrate degradation; pentose phosphate pathway; D-ribulose 5-phosphate from D-glucose 6-phosphate (oxidative stage): step 2/3. Functionally, catalyzes the hydrolysis of 6-phosphogluconolactone to 6-phosphogluconate. In Salmonella arizonae (strain ATCC BAA-731 / CDC346-86 / RSK2980), this protein is 6-phosphogluconolactonase.